A 219-amino-acid chain; its full sequence is Asperlin biosynthesis cluster protein I (219 aa).

The disordered stretch occupies residues 97–124; the sequence is TGSSDNSPTATGIGAAGLTGDRPSSSGA. The segment covering 105 to 116 has biased composition (low complexity); the sequence is TATGIGAAGLTG.

It participates in polyketide biosynthesis. Functionally, part of the gene cluster that mediates the biosynthesis of asperlin, a polyketide showing anti-inflammatory, antitumor and antibiotic activities. The first step of the asperlin biosynthesis is the production of the intermediate 2,4,6-octatrienoic acid by the highly redusing polyketide synthase alnA with cleavage of the PKS product by the esterase alnB. 2,4,6-octatrienoic acid is further converted to asperlin via several steps involving the remaining enzymes from the cluster. This is Asperlin biosynthesis cluster protein I from Emericella nidulans (strain FGSC A4 / ATCC 38163 / CBS 112.46 / NRRL 194 / M139) (Aspergillus nidulans).